A 903-amino-acid chain; its full sequence is Envelope glycoprotein B (903 aa).

A signal peptide spans 1-29 (MRQGAARGCRWFVVWALLGLTLGVLVASA). A compositionally biased stretch (low complexity) spans 30–51 (APSSPGTPGVAAATQAANGGPA). Residues 30 to 87 (APSSPGTPGVAAATQAANGGPATPAPPAPGPAPTGDTKPKKNKKPKNPPPPRPAGDNA) are disordered. At 30–773 (APSSPGTPGV…SGVSSFMSNP (744 aa)) the chain is on the virion surface side. Residues 52 to 61 (TPAPPAPGPA) show a composition bias toward pro residues. N-linked (GlcNAc...) asparagine; by host glycans are attached at residues Asn-86 and Asn-140. 5 cysteine pairs are disulfide-bonded: Cys-115/Cys-572, Cys-132/Cys-528, Cys-206/Cys-270, Cys-363/Cys-411, and Cys-595/Cys-632. Involved in fusion and/or binding to host membrane regions lie at residues 172–178 (VWFGHRY) and 257–264 (RVEAFHRY). N-linked (GlcNAc...) asparagine; by host glycans are attached at residues Asn-397 and Asn-429. Residues 469–491 (REQSRKPPNPTPPPPGASANASV) form a disordered region. Residues 475 to 484 (PPNPTPPPPG) show a composition bias toward pro residues. Asn-488 is a glycosylation site (N-linked (GlcNAc...) asparagine; by host). A glycan (N-linked (GlcNAc...) asparagine; by host) is linked at Asn-673. The interval 718–771 (IDTVIHADANAAMFAGLGAFFEGMGDLGRAVGKVVMGIVGGVVSAVSGVSSFMS) is hydrophobic membrane proximal region. The helical transmembrane segment at 774 to 794 (FGALAVGLLVLAGLAAAFFAF) threads the bilayer. The Intravirion segment spans residues 795–903 (RYVMRLQSNP…KDGDADEDDL (109 aa)). A Golgi targeting motif is present at residues 848–851 (YMAL). The interval 882-903 (KRRNTNYTQVPNKDGDADEDDL) is disordered. The Internalization motif motif lies at 888-891 (YTQV).

This sequence belongs to the herpesviridae glycoprotein B family. Homotrimer; disulfide-linked. Interacts with host receptor MYH9/NMMHC-IIA. Interacts with host receptor MYH10/NMMHC-IIB. Interacts with the host coreceptor PILRA. Binds to heparan sulfate proteoglycans. Interacts with gH/gL heterodimer. Interacts with gD. In terms of processing, the cytoplasmic tail is phosphorylated by the viral kinase US3. Phosphorylation may be linked to a down-regulation of gB expression on cell surface. Post-translationally, ubiquitinated.

It is found in the virion membrane. The protein localises to the host cell membrane. The protein resides in the host endosome membrane. It localises to the host Golgi apparatus membrane. In terms of biological role, envelope glycoprotein that forms spikes at the surface of virion envelope and binds to the host cell entry receptors MYH9/NMMHC-IIA and MYH10/NMMHC-IIB, promoting the virus entry into host cells. Essential for the initial attachment to heparan sulfate moieties of the host cell surface proteoglycans. Involved in fusion of viral and cellular membranes leading to virus entry into the host cell: following initial binding to its host cell entry receptors, membrane fusion is mediated by the fusion machinery composed at least of gB and the heterodimer gH/gL. May be involved in the fusion between the virion envelope and the outer nuclear membrane during virion egress. Also plays a role, together with gK, in virus-induced cell-to-cell fusion (syncytia formation). The polypeptide is Envelope glycoprotein B (Homo sapiens (Human)).